Consider the following 64-residue polypeptide: Probable tautomerase lp_1712 (64 aa).

Catalysis depends on proline 2, which acts as the Proton acceptor; via imino nitrogen.

It belongs to the 4-oxalocrotonate tautomerase family.

This is Probable tautomerase lp_1712 from Lactiplantibacillus plantarum (strain ATCC BAA-793 / NCIMB 8826 / WCFS1) (Lactobacillus plantarum).